Here is a 513-residue protein sequence, read N- to C-terminus: Putative ADP-ribosyl glycohydrolase L444 (513 aa).

Residues 1–23 (MSDKIQSRESKTTKPTKTEKISD) are compositionally biased toward basic and acidic residues. The disordered stretch occupies residues 1 to 33 (MSDKIQSRESKTTKPTKTEKISDKSGNLSQVKS). The span at 24 to 33 (KSGNLSQVKS) shows a compositional bias: polar residues.

This sequence belongs to the ADP-ribosylglycohydrolase family.

This chain is Putative ADP-ribosyl glycohydrolase L444, found in Acanthamoeba polyphaga mimivirus (APMV).